Consider the following 90-residue polypeptide: Probable Fe(2+)-trafficking protein (90 aa).

It belongs to the Fe(2+)-trafficking protein family.

In terms of biological role, could be a mediator in iron transactions between iron acquisition and iron-requiring processes, such as synthesis and/or repair of Fe-S clusters in biosynthetic enzymes. The polypeptide is Probable Fe(2+)-trafficking protein (Aeromonas salmonicida (strain A449)).